Consider the following 732-residue polypeptide: Probable boron transporter 3 (732 aa).

An N-acetylmethionine modification is found at Met1. At 1 to 37 (MDEAESFVPFQGIKKDVKGRLNCYKQDWISGLRAGFR) the chain is on the cytoplasmic side. Residues 38–58 (ILAPTTYIFFASAIPVITFGE) traverse the membrane as a helical segment. At 59-77 (QLERDTDGKITAVQTLVST) the chain is on the extracellular side. Residues 78–98 (ALCGVIHSIIGGQPLLILGVA) traverse the membrane as a helical segment. Over 99–123 (EPTVIMYTFMFNFAKSRTDLGSNLF) the chain is Cytoplasmic. A helical membrane pass occupies residues 124–144 (LAWTGWVCLWTGLLLFLLAVL). Residues 145-157 (GACTFINRFTRLA) are Extracellular-facing. Residues 158–178 (GELFGILIAMLFMQEAIRGIV) form a helical membrane-spanning segment. At 179-197 (DEFGVPGRTNPRSAEFQPA) the chain is on the cytoplasmic side. Residues 198–218 (WVFANGMFGLVLSSGLLYTGL) traverse the membrane as a helical segment. Topologically, residues 219–234 (KSRKARSWRFGAEWLR) are extracellular. Residues 235 to 255 (GFIADYGVPVMVVVWTCISYI) traverse the membrane as a helical segment. Residues 256-291 (PWKSVPQGIPRRLVSPNPWSPGAYQNWTVIKEMVDV) lie on the Cytoplasmic side of the membrane. A helical membrane pass occupies residues 292-312 (PVLYILLAVVPASMIAVLYYF). Residues 313 to 339 (DHSVASQLAQQEDFNLRKPPAYHYDLF) lie on the Extracellular side of the membrane. The chain crosses the membrane as a helical span at residues 340–360 (LLGFLTILCGLIGIPPSNGVI). The Cytoplasmic segment spans residues 361–463 (PQSPMHTKSL…ILPVEVKEQR (103 aa)). Residues 464–484 (VSNFLQAMMVAGCVAAMPLIK) form a helical membrane-spanning segment. At 485 to 556 (RIPSSVLWGY…LFQTAYLLVC (72 aa)) the chain is on the extracellular side. The chain crosses the membrane as a helical span at residues 557 to 577 (FGITWVPVAGVLFPLMIMFLV). The Cytoplasmic segment spans residues 578-732 (PVRQYVLPNF…QRLSNLGKSV (155 aa)). The tract at residues 695-732 (GGGEISPRSSAGRAPFSPRSATGGGGGEQRLSNLGKSV) is disordered.

It belongs to the anion exchanger (TC 2.A.31.3) family.

The protein resides in the membrane. Probable boron transporter. Boron is essential for maintaining the integrity of plants cell walls. This is Probable boron transporter 3 (BOR3) from Arabidopsis thaliana (Mouse-ear cress).